We begin with the raw amino-acid sequence, 309 residues long: Probable manganese-dependent inorganic pyrophosphatase (309 aa).

H9, D13, D15, D75, H97, and D149 together coordinate Mn(2+).

The protein belongs to the PPase class C family. The cofactor is Mn(2+).

The protein resides in the cytoplasm. The catalysed reaction is diphosphate + H2O = 2 phosphate + H(+). The chain is Probable manganese-dependent inorganic pyrophosphatase from Staphylococcus saprophyticus subsp. saprophyticus (strain ATCC 15305 / DSM 20229 / NCIMB 8711 / NCTC 7292 / S-41).